The sequence spans 648 residues: Zinc finger protein 202 (648 aa).

Lys22 is covalently cross-linked (Glycyl lysine isopeptide (Lys-Gly) (interchain with G-Cter in SUMO2)). Residues 46–127 enclose the SCAN box domain; sequence HQNFRRFRYQ…VTLVEGLQKQ (82 aa). The segment at 146–221 is disordered; sequence SEETVHLGVE…PDLPAERSSG (76 aa). Residues 165 to 182 are compositionally biased toward polar residues; that stretch reads PVQSSTPEQSPEETTQSP. In terms of domain architecture, KRAB spans 237–308; it reads VTFKDVAVCF…DIQEPQETQE (72 aa). 2 C2H2-type zinc fingers span residues 397–419 and 425–447; these read HDCS…LRTH and YKCM…QKVH. Residues Lys454 and Lys460 each participate in a glycyl lysine isopeptide (Lys-Gly) (interchain with G-Cter in SUMO2) cross-link. Residue Ser466 is modified to Phosphoserine. A C2H2-type 3 zinc finger spans residues 481–503; the sequence is YRCDDCGKHFRWTSDLVRHQRTH. Glycyl lysine isopeptide (Lys-Gly) (interchain with G-Cter in SUMO2) cross-links involve residues Lys507 and Lys521. 5 consecutive C2H2-type zinc fingers follow at residues 509–531, 537–559, 565–587, 593–615, and 621–643; these read FFCT…QRIH, YLCG…RKTH, YLCS…LRGH, CRCN…QRTH, and FTCP…QRTH.

In terms of assembly, interacts with SDP1. As to expression, highly expressed in testis. Also expressed in breast carcinoma cell lines.

The protein resides in the nucleus. Transcriptional repressor that binds to elements found predominantly in genes that participate in lipid metabolism. Among its targets are structural components of lipoprotein particles (apolipoproteins AIV, CIII, and E), enzymes involved in lipid processing (lipoprotein lipase, lecithin cholesteryl ester transferase), transporters involved in lipid homeostasis (ABCA1, ABCG1), and several genes involved in processes related to energy metabolism and vascular disease. The protein is Zinc finger protein 202 (ZNF202) of Homo sapiens (Human).